The chain runs to 178 residues: Large ribosomal subunit protein bL25 (178 aa).

It belongs to the bacterial ribosomal protein bL25 family. CTC subfamily. Part of the 50S ribosomal subunit; part of the 5S rRNA/L5/L18/L25 subcomplex. Contacts the 5S rRNA. Binds to the 5S rRNA independently of L5 and L18.

In terms of biological role, this is one of the proteins that binds to the 5S RNA in the ribosome where it forms part of the central protuberance. In Helicobacter pylori (strain HPAG1), this protein is Large ribosomal subunit protein bL25.